A 95-amino-acid chain; its full sequence is MALRHKSAQKRHRQSLKRRLINRSRKNTIKTFSKKAVVAAQNGAENAVELHRKAESLIDKAAKGSTLHKNAAARKKSRLAKALNKAKAAQAAQPA.

2 disordered regions span residues 1–26 (MALR…RSRK) and 76–95 (KSRL…AQPA). Positions 80–95 (AKALNKAKAAQAAQPA) are enriched in low complexity.

Belongs to the bacterial ribosomal protein bS20 family.

Its function is as follows. Binds directly to 16S ribosomal RNA. The sequence is that of Small ribosomal subunit protein bS20 from Deinococcus geothermalis (strain DSM 11300 / CIP 105573 / AG-3a).